A 313-amino-acid polypeptide reads, in one-letter code: MAVASSTRPSQKQSTSKLQPWIQLTRVRKFAGTMVLFWPFAWGLTMAARALLLPVQTFGTILACGFFASCLLHSAGCIWNDILDQDFDRQVERTKSRPIASGAISNTGALIFMFAHLFILMGMIWTSNSLAWMIGIISIFPLPGIYPLMKRITYWPQAWLGIALNTGIVMAWAYTTGTYPTSSIVLSVGAWAWTIYYDTIYACQDKKDDINAGVKSTALLFGSYIKPVLSLFGSIIVGSLLISGILNNQELPYFLVSVGGGGLHLATQLWQVDLDTPKSCWNAFHSTAFNFGAIVWAGLLLDYAWAVGVGAIM.

2 helical membrane-spanning segments follow: residues 30-52 (FAGT…RALL) and 57-79 (TFGT…GCIW). Residues 81 to 88 (DILDQDFD) carry the NDxxDxxxD motif. 2 residues coordinate Mg(2+): D84 and D88. The next 3 helical transmembrane spans lie at 99–121 (IASG…FILM), 131–148 (AWMI…IYPL), and 155–177 (WPQA…YTTG). Positions 205 and 209 each coordinate Mg(2+). Residues 205 to 209 (DKKDD) carry the DxxxD motif. Residues 205 to 209 (DKKDD) carry the YxxxK motif. 3 helical membrane passes run 227-247 (PVLS…GILN), 250-270 (ELPY…TQLW), and 293-313 (AIVW…GAIM).

Belongs to the UbiA prenyltransferase family. Mg(2+) serves as cofactor.

The protein localises to the membrane. It catalyses the reaction hydroquinone + (2E)-geranyl diphosphate = (2E)-geranylhydroquinone + diphosphate. It participates in secondary metabolite biosynthesis; terpenoid biosynthesis. Its function is as follows. Prenyltransferase; part of the gene cluster that mediates the biosynthesis of clavilactone A, a meroterpenoid that features a unique benzo-fused ten-membered carbocyclic ring unit with an alpha,beta-epoxy-gamma-lactone moiety, forming an intriguing 10/5/3 tricyclic nested skeleton. ClaR, ClaS and ClaT are sufficient to produce clavilactone A. Within the pathway, claS acts as an atypical UbiA prenyltransferase that transfers geranyl pyrophosphate (GPP) to hydroquinone (HYQ) instead of p-hydroxybenzoic acid (PHB), producing the first intermediate geranylhydroquinone. The cytochrome P450 monooxygenase claR then catalyzes the diradical coupling reaction between the intramolecular hydroquinone and allyl moieties to form the benzo-fused ten-membered carbocyclic ring unit of wigantol. Finally the cytochrome P450 monooxygenase claT exquisitely and stereoselectively assembles the alpha,beta-epoxy-gamma-lactone moiety, producing clavilactone A via arnebinol A. The protein is UbiA prenyltransferase claS of Ampulloclitocybe clavipes (Club foot).